The sequence spans 164 residues: Protein SprT (164 aa).

The SprT-like domain maps to 13-156 (YQQAEAFFKR…LCRRCREPLV (144 aa)). A Zn(2+)-binding site is contributed by His-69. Glu-70 is a catalytic residue. His-73 lines the Zn(2+) pocket.

It belongs to the SprT family. Zn(2+) serves as cofactor.

Its subcellular location is the cytoplasm. In Pseudomonas syringae pv. syringae (strain B728a), this protein is Protein SprT.